The chain runs to 205 residues: Putative 3-methyladenine DNA glycosylase (205 aa).

This sequence belongs to the DNA glycosylase MPG family.

This is Putative 3-methyladenine DNA glycosylase from Clostridium perfringens (strain SM101 / Type A).